The following is a 428-amino-acid chain: Adenylosuccinate synthetase (428 aa).

Residues 13 to 19 (GDEGKGK) and 41 to 43 (GHT) each bind GTP. Residue aspartate 14 is the Proton acceptor of the active site. Mg(2+) contacts are provided by aspartate 14 and glycine 41. Residues 14–17 (DEGK), 39–42 (NAGH), threonine 130, arginine 144, glutamine 223, threonine 238, and arginine 302 contribute to the IMP site. Catalysis depends on histidine 42, which acts as the Proton donor. 298–304 (ASTGRRR) provides a ligand contact to substrate. GTP is bound by residues arginine 304, 330–332 (KLD), and 412–414 (STG).

It belongs to the adenylosuccinate synthetase family. In terms of assembly, homodimer. It depends on Mg(2+) as a cofactor.

The protein localises to the cytoplasm. The enzyme catalyses IMP + L-aspartate + GTP = N(6)-(1,2-dicarboxyethyl)-AMP + GDP + phosphate + 2 H(+). It functions in the pathway purine metabolism; AMP biosynthesis via de novo pathway; AMP from IMP: step 1/2. Its function is as follows. Plays an important role in the de novo pathway of purine nucleotide biosynthesis. Catalyzes the first committed step in the biosynthesis of AMP from IMP. In Dichelobacter nodosus (strain VCS1703A), this protein is Adenylosuccinate synthetase.